The sequence spans 511 residues: Centrosomal protein CCDC61 (511 aa).

M1 is modified (N-acetylmethionine). Residues M1–P143 form a head domain region. Coiled coils occupy residues I176–E203 and S246–E273. Phosphothreonine is present on T283. 2 disordered regions span residues L284–R413 and S429–V476. Over residues R290 to T302 the composition is skewed to basic and acidic residues. Phosphoserine occurs at positions 330 and 332. Residues K360–M369 are compositionally biased toward low complexity. 2 positions are modified to phosphoserine: S371 and S374. Residues S433 to G442 show a composition bias toward basic residues. The residue at position 446 (S446) is a Phosphoserine. Over residues P449–T458 the composition is skewed to polar residues. Residue S472 is modified to Phosphoserine.

Belongs to the CCDC61 family. As to quaternary structure, forms homodimers (via head domain). Interacts with CEP170. Interacts with PCM1 and CEP131. Binds tubulin.

The protein resides in the cytoplasm. It is found in the cytoskeleton. The protein localises to the microtubule organizing center. It localises to the centrosome. Its subcellular location is the centriolar satellite. The protein resides in the cilium basal body. Its function is as follows. Microtubule-binding centrosomal protein required for centriole cohesion, independently of the centrosome-associated protein/CEP250 and rootletin/CROCC linker. In interphase, required for anchoring microtubule at the mother centriole subdistal appendages and for centrosome positioning. During mitosis, may be involved in spindle assembly and chromatin alignment by regulating the organization of spindle microtubules into a symmetrical structure. Plays a non-essential role in ciliogenesis. In Mus musculus (Mouse), this protein is Centrosomal protein CCDC61.